The primary structure comprises 540 residues: Probable protein kinase UbiB (540 aa).

Residues 24–44 (LLFDQPLLPWWLASLRLLMPW) traverse the membrane as a helical segment. Residues 126–494 (RFDVEPLASA…RRRQGDRWAL (369 aa)) form the Protein kinase domain. ATP is bound by residues 132–140 (LASASVAQV) and Lys154. Asp289 (proton acceptor) is an active-site residue. Helical transmembrane passes span 496–516 (LLGAGLLGGGAVLAAGAAETA) and 518–538 (LAAPAAWPAWLMLAAGLYLIV).

Belongs to the ABC1 family. UbiB subfamily.

The protein resides in the cell inner membrane. It functions in the pathway cofactor biosynthesis; ubiquinone biosynthesis [regulation]. Functionally, is probably a protein kinase regulator of UbiI activity which is involved in aerobic coenzyme Q (ubiquinone) biosynthesis. This Pseudomonas putida (strain ATCC 700007 / DSM 6899 / JCM 31910 / BCRC 17059 / LMG 24140 / F1) protein is Probable protein kinase UbiB.